We begin with the raw amino-acid sequence, 227 residues long: Cytochrome c oxidase subunit 2 (227 aa).

The Mitochondrial intermembrane portion of the chain corresponds to 1-14 (MAYPAQMGFQDATS). The helical transmembrane segment at 15–45 (PIMEELLYFHDHTLMIVFMISSLVLYTISLM) threads the bilayer. The Mitochondrial matrix portion of the chain corresponds to 46–59 (LTTSLTHTNTMNAQ). Residues 60 to 87 (EVETVWTILPAIICILIALPSLRILYMM) traverse the membrane as a helical segment. The Mitochondrial intermembrane segment spans residues 88 to 227 (DEINNPSLTI…YFEKWLLTML (140 aa)). His161, Cys196, Glu198, Cys200, His204, and Met207 together coordinate Cu cation. Glu198 is a Mg(2+) binding site. At Tyr218 the chain carries Phosphotyrosine.

The protein belongs to the cytochrome c oxidase subunit 2 family. In terms of assembly, component of the cytochrome c oxidase (complex IV, CIV), a multisubunit enzyme composed of 14 subunits. The complex is composed of a catalytic core of 3 subunits MT-CO1, MT-CO2 and MT-CO3, encoded in the mitochondrial DNA, and 11 supernumerary subunits COX4I, COX5A, COX5B, COX6A, COX6B, COX6C, COX7A, COX7B, COX7C, COX8 and NDUFA4, which are encoded in the nuclear genome. The complex exists as a monomer or a dimer and forms supercomplexes (SCs) in the inner mitochondrial membrane with NADH-ubiquinone oxidoreductase (complex I, CI) and ubiquinol-cytochrome c oxidoreductase (cytochrome b-c1 complex, complex III, CIII), resulting in different assemblies (supercomplex SCI(1)III(2)IV(1) and megacomplex MCI(2)III(2)IV(2)). Found in a complex with TMEM177, COA6, COX18, COX20, SCO1 and SCO2. Interacts with TMEM177 in a COX20-dependent manner. Interacts with COX20. Interacts with COX16. Cu cation is required as a cofactor.

The protein localises to the mitochondrion inner membrane. The enzyme catalyses 4 Fe(II)-[cytochrome c] + O2 + 8 H(+)(in) = 4 Fe(III)-[cytochrome c] + 2 H2O + 4 H(+)(out). In terms of biological role, component of the cytochrome c oxidase, the last enzyme in the mitochondrial electron transport chain which drives oxidative phosphorylation. The respiratory chain contains 3 multisubunit complexes succinate dehydrogenase (complex II, CII), ubiquinol-cytochrome c oxidoreductase (cytochrome b-c1 complex, complex III, CIII) and cytochrome c oxidase (complex IV, CIV), that cooperate to transfer electrons derived from NADH and succinate to molecular oxygen, creating an electrochemical gradient over the inner membrane that drives transmembrane transport and the ATP synthase. Cytochrome c oxidase is the component of the respiratory chain that catalyzes the reduction of oxygen to water. Electrons originating from reduced cytochrome c in the intermembrane space (IMS) are transferred via the dinuclear copper A center (CU(A)) of subunit 2 and heme A of subunit 1 to the active site in subunit 1, a binuclear center (BNC) formed by heme A3 and copper B (CU(B)). The BNC reduces molecular oxygen to 2 water molecules using 4 electrons from cytochrome c in the IMS and 4 protons from the mitochondrial matrix. The protein is Cytochrome c oxidase subunit 2 (MT-CO2) of Daubentonia madagascariensis (Aye-aye).